We begin with the raw amino-acid sequence, 690 residues long: MTGKRLKASVIIDLNGNLSRRSRQYSNQINALSRSGQSSLRALRMEVVRVSGAIDRMGSLSTRTFRMLSAGALGIAGVGYTANKLFIGAAAQREQQIIAMNSLYHGDKVRAQAMMAWAKQNAKDTTWGLSGVLDEIRSSKGFGMTDEQTKQFITMLQDQGAMHGWDLPTAQGASLQLKQMFARQQITAADANLLTGYGINVYQALADATGTDVKKIRDLGTKGKLGMKSILTVFRTLSEQSKGAQASAMNSWDGMFAQMEANLLEFRIKVANSGPFEEIKNEMRRVLNWHDMADKSGELDALAENIGQKFLTTFRTVKISAQELWRWLKPGKDALAWVDQNIVSLKKLAAVLVSVWLANKALRAGWAVAKPSWQVASYPFKTGRRMWRWMRNRKRGQAGLPVPDAMTSETLLQGIGIQRVFVINWPRGFGDYGSGGGRRVRSGGRMAPLLPRQPLLLSGPQPLALPAPRPVLALPPPGVPVTARPAPLPLPGKSGLLSRLAGSAAGQLVTGTVGKLADAGRAVGGWFSGIGNKLAGSAIGRVVTKGAGALGWMGKGAGRALSRLGGPVMGALQLAPVLMDEQASTHEKAGAIGSTAGAWLGGAVGSLAGPLGTVAGATLGSVAGEYLGGFVTDLYQKWTATDKEPQEQKVNAEASLRVELGEGLRLTSSRVTEDGMGLNIYAGDNYITGW.

This sequence belongs to the Mulikevirus tape measure protein family.

The protein localises to the host cytoplasm. Functionally, serves as a base for tail tube protein polymerization and acts as a template for tail length determination. Might remain in the tube and be ejected from the tail prior to the DNA during DNA ejection (Potential). This chain is Probable tape measure protein, found in Enterobacteriaceae (Bacteriophage Mu).